Here is a 359-residue protein sequence, read N- to C-terminus: DNA-directed RNA polymerase RPB3-11 homolog (359 aa).

It in the N-terminal section; belongs to the archaeal RpoD/eukaryotic RPB3 RNA polymerase subunit family. In the C-terminal section; belongs to the archaeal RpoL/eukaryotic RPB11/RPC19 RNA polymerase subunit family. Part of the viral DNA-directed RNA polymerase that consists of 8 polII-like subunits (RPB1, RPB2, RPB3, RPB5, RPB6, RPB7, RPB9, RPB10), a capping enzyme and a termination factor.

The protein resides in the host cytoplasm. The protein localises to the virion. In terms of biological role, component of the DNA-directed RNA polymerase (RNAP) that catalyzes the transcription in the cytoplasm of viral DNA into RNA using the four ribonucleoside triphosphates as substrates. In Ornithodoros (relapsing fever ticks), this protein is DNA-directed RNA polymerase RPB3-11 homolog.